The following is a 37-amino-acid chain: Large ribosomal subunit protein bL36 (37 aa).

This sequence belongs to the bacterial ribosomal protein bL36 family.

The chain is Large ribosomal subunit protein bL36 (rpmJ) from Mycobacterium tuberculosis (strain ATCC 25618 / H37Rv).